The primary structure comprises 1133 residues: DNA repair protein rad8 (1133 aa).

Disordered stretches follow at residues 1–34 (MKRK…SKPN) and 392–413 (PEAR…EEDV). Residue S18 is modified to Phosphoserine. A Helicase ATP-binding domain is found at 516–705 (PNSMPYHRGG…YSLIKFMRYE (190 aa)). Position 529 to 536 (529 to 536 (DEMGLGKT)) interacts with ATP. The DEGH box signature appears at 656–659 (DEGH). An RING-type zinc finger spans residues 877-923 (CPICCNEPIQNPLLLNCKHACCGDCLSEHIQYQKRRNIIPPLCHTCR). In terms of domain architecture, Helicase C-terminal spans 971–1125 (QLRQLTHSSE…EGKQQVQSIE (155 aa)).

This sequence belongs to the SNF2/RAD54 helicase family.

It localises to the cytoplasm. Its subcellular location is the nucleus. Functionally, probable helicase, member of the UBC2/RAD6 epistasis group. Functions with DNA repair protein rad18 in error-free postreplication DNA repair. Involved in the maintenance of wild-type rates of instability of simple repetitive sequences such as poly(GT) repeats. Plays a role in surviving topoisomerase-mediated DNA damage. The chain is DNA repair protein rad8 from Schizosaccharomyces pombe (strain 972 / ATCC 24843) (Fission yeast).